Here is a 598-residue protein sequence, read N- to C-terminus: Aspartate--tRNA(Asp/Asn) ligase (598 aa).

Residue Glu-177 coordinates L-aspartate. The tract at residues 201–204 (QLFK) is aspartate. An L-aspartate-binding site is contributed by Arg-223. ATP contacts are provided by residues 223–225 (RDE) and Gln-232. His-456 is an L-aspartate binding site. Glu-493 provides a ligand contact to ATP. Residue Arg-500 participates in L-aspartate binding. Residue 545 to 548 (GLDR) coordinates ATP.

It belongs to the class-II aminoacyl-tRNA synthetase family. Type 1 subfamily. As to quaternary structure, homodimer.

The protein resides in the cytoplasm. It carries out the reaction tRNA(Asx) + L-aspartate + ATP = L-aspartyl-tRNA(Asx) + AMP + diphosphate. Functionally, aspartyl-tRNA synthetase with relaxed tRNA specificity since it is able to aspartylate not only its cognate tRNA(Asp) but also tRNA(Asn). Reaction proceeds in two steps: L-aspartate is first activated by ATP to form Asp-AMP and then transferred to the acceptor end of tRNA(Asp/Asn). The chain is Aspartate--tRNA(Asp/Asn) ligase from Prochlorococcus marinus (strain MIT 9301).